A 132-amino-acid chain; its full sequence is MRHRKSGRQLNRNSSHRQAMFRNMASSLVRHEVIKTTVAKAKELRRVVEPLITLAKSDSVANRRLAFARTRDAEVVGKLFNELGPRYQERPGGYTRILKCGLRTGDKAPMAYIELVGRPEDAEAVEADDSAE.

It belongs to the bacterial ribosomal protein bL17 family. As to quaternary structure, part of the 50S ribosomal subunit. Contacts protein L32.

The sequence is that of Large ribosomal subunit protein bL17 from Shewanella woodyi (strain ATCC 51908 / MS32).